The primary structure comprises 489 residues: Dihydropyrimidinase 1 (489 aa).

Zn(2+) contacts are provided by histidine 61, histidine 63, and lysine 156. The residue at position 156 (lysine 156) is an N6-carboxylysine. Residue tyrosine 161 coordinates substrate. Positions 189 and 245 each coordinate Zn(2+). A substrate-binding site is contributed by serine 295. Aspartate 323 lines the Zn(2+) pocket. Position 344 (asparagine 344) interacts with substrate.

Belongs to the metallo-dependent hydrolases superfamily. Hydantoinase/dihydropyrimidinase family. In terms of assembly, homotetramer. Zn(2+) is required as a cofactor. In terms of processing, carboxylation allows a single lysine to coordinate two zinc ions.

The protein resides in the nucleus. It catalyses the reaction 5,6-dihydrouracil + H2O = 3-(carbamoylamino)propanoate + H(+). The sequence is that of Dihydropyrimidinase 1 (dhp-1) from Caenorhabditis briggsae.